The following is a 231-amino-acid chain: Flagellar L-ring protein (231 aa).

The N-terminal stretch at 1-18 (MNRLMIVSLLGIATALGG) is a signal peptide. A lipid anchor (N-palmitoyl cysteine) is attached at cysteine 19. Cysteine 19 carries S-diacylglycerol cysteine lipidation. The tract at residues 118–141 (LSLSAEYGGSRDAKGDSQAGQSNS) is disordered.

Belongs to the FlgH family. The basal body constitutes a major portion of the flagellar organelle and consists of four rings (L,P,S, and M) mounted on a central rod.

Its subcellular location is the cell outer membrane. The protein resides in the bacterial flagellum basal body. Assembles around the rod to form the L-ring and probably protects the motor/basal body from shearing forces during rotation. The sequence is that of Flagellar L-ring protein from Pseudomonas aeruginosa (strain UCBPP-PA14).